Reading from the N-terminus, the 129-residue chain is MQVNHLLRQAVKQTTRAGRLGSRKPHKPLLPPLQLYRRILREHRNLPTMQRELGDQYVKNEFKLHKSTDNPLYIVGFLASWQDYLHMITRGEWEEGTLSTDLLEKMSPEQVTQLYELMKEAEQLKSGGE.

The transit peptide at 1-21 directs the protein to the mitochondrion; that stretch reads MQVNHLLRQAVKQTTRAGRLG.

The protein belongs to the complex I LYR family. SDHAF3 subfamily. In terms of assembly, interacts with the iron-sulfur protein subunit within the SDH catalytic dimer.

It localises to the mitochondrion matrix. In terms of biological role, plays an essential role in the assembly of succinate dehydrogenase (SDH), an enzyme complex (also referred to as respiratory complex II) that is a component of both the tricarboxylic acid (TCA) cycle and the mitochondrial electron transport chain, and which couples the oxidation of succinate to fumarate with the reduction of ubiquinone (coenzyme Q) to ubiquinol. Promotes maturation of the iron-sulfur protein subunit of the SDH catalytic dimer, protecting it from the deleterious effects of oxidants. May act together with SDHAF1. The protein is Succinate dehydrogenase assembly factor 3, mitochondrial of Kluyveromyces lactis (strain ATCC 8585 / CBS 2359 / DSM 70799 / NBRC 1267 / NRRL Y-1140 / WM37) (Yeast).